Here is a 181-residue protein sequence, read N- to C-terminus: Acireductone dioxygenase (181 aa).

Residues H97, H99, E103, and H141 each contribute to the Fe(2+) site. Ni(2+) contacts are provided by H97, H99, E103, and H141.

Belongs to the acireductone dioxygenase (ARD) family. In terms of assembly, monomer. Fe(2+) serves as cofactor. It depends on Ni(2+) as a cofactor.

The catalysed reaction is 1,2-dihydroxy-5-(methylsulfanyl)pent-1-en-3-one + O2 = 3-(methylsulfanyl)propanoate + CO + formate + 2 H(+). The enzyme catalyses 1,2-dihydroxy-5-(methylsulfanyl)pent-1-en-3-one + O2 = 4-methylsulfanyl-2-oxobutanoate + formate + 2 H(+). It functions in the pathway amino-acid biosynthesis; L-methionine biosynthesis via salvage pathway; L-methionine from S-methyl-5-thio-alpha-D-ribose 1-phosphate: step 5/6. Functionally, catalyzes 2 different reactions between oxygen and the acireductone 1,2-dihydroxy-3-keto-5-methylthiopentene (DHK-MTPene) depending upon the metal bound in the active site. Fe-containing acireductone dioxygenase (Fe-ARD) produces formate and 2-keto-4-methylthiobutyrate (KMTB), the alpha-ketoacid precursor of methionine in the methionine recycle pathway. Ni-containing acireductone dioxygenase (Ni-ARD) produces methylthiopropionate, carbon monoxide and formate, and does not lie on the methionine recycle pathway. In Pseudomonas savastanoi pv. phaseolicola (strain 1448A / Race 6) (Pseudomonas syringae pv. phaseolicola (strain 1448A / Race 6)), this protein is Acireductone dioxygenase.